The following is a 312-amino-acid chain: Malate dehydrogenase (312 aa).

Residues 12–17 and aspartate 36 each bind NAD(+); that span reads GAGFTG. Substrate is bound by residues arginine 87 and arginine 93. Residues asparagine 100 and 123–125 contribute to the NAD(+) site; that span reads LTN. Asparagine 125 serves as a coordination point for substrate. Position 149 is a phosphoserine (serine 149). Position 156 (arginine 156) interacts with substrate. The active-site Proton acceptor is the histidine 180.

The protein belongs to the LDH/MDH superfamily. MDH type 3 family.

It catalyses the reaction (S)-malate + NAD(+) = oxaloacetate + NADH + H(+). Functionally, catalyzes the reversible oxidation of malate to oxaloacetate. The protein is Malate dehydrogenase of Geobacillus thermodenitrificans.